Here is a 454-residue protein sequence, read N- to C-terminus: GTPase Der (454 aa).

EngA-type G domains lie at 4–168 (PQVA…PEKD) and 178–352 (MKIA…KQAQ). Residues 10–17 (GRPNVGKS), 57–61 (DTGGM), 120–123 (NKAD), 184–191 (GRRNVGKS), 231–235 (DTPGL), and 296–299 (NKWD) contribute to the GTP site. Residues 353–437 (SRVSTGELNR…PIKLYMQQRS (85 aa)) enclose the KH-like domain.

It belongs to the TRAFAC class TrmE-Era-EngA-EngB-Septin-like GTPase superfamily. EngA (Der) GTPase family. In terms of assembly, associates with the 50S ribosomal subunit.

GTPase that plays an essential role in the late steps of ribosome biogenesis. This chain is GTPase Der, found in Rhodopirellula baltica (strain DSM 10527 / NCIMB 13988 / SH1).